A 192-amino-acid chain; its full sequence is MWKRMTAKAEGLYIADTKSFVTKQMDKLDFDYGGIPGDLHFGLTKKAGAREPMFSRGTEIFNRRQISIVSIEECNEIALKMGVPRILPEWLGANVAVSGMPDLTSLKEGSRIIFPSGAALLCEGENDPCIQPGEVIQSYYPDQPKLASAFVRHALGIRGIVCIVERPGAVYTGDEIEVHSYQRKVKRKAERV.

The MOSC domain maps to 15–179; sequence ADTKSFVTKQ…VYTGDEIEVH (165 aa).

The sequence is that of Putative metal-sulfur cluster biosynthesis proteins YuaD (yuaD) from Bacillus subtilis (strain 168).